A 474-amino-acid polypeptide reads, in one-letter code: Glutamate--tRNA ligase 2 (474 aa).

Residues 16 to 26 carry the 'HIGH' region motif; the sequence is PSPTGFLHIGG. Positions 245 to 249 match the 'KMSKS' region motif; it reads KLSKR. Lys-248 lines the ATP pocket.

Belongs to the class-I aminoacyl-tRNA synthetase family. Glutamate--tRNA ligase type 1 subfamily. As to quaternary structure, monomer.

The protein resides in the cytoplasm. It catalyses the reaction tRNA(Glu) + L-glutamate + ATP = L-glutamyl-tRNA(Glu) + AMP + diphosphate. Functionally, catalyzes the attachment of glutamate to tRNA(Glu) in a two-step reaction: glutamate is first activated by ATP to form Glu-AMP and then transferred to the acceptor end of tRNA(Glu). This is Glutamate--tRNA ligase 2 from Rhizorhabdus wittichii (strain DSM 6014 / CCUG 31198 / JCM 15750 / NBRC 105917 / EY 4224 / RW1) (Sphingomonas wittichii).